The primary structure comprises 136 residues: ATP synthase epsilon chain, chloroplastic (136 aa).

This sequence belongs to the ATPase epsilon chain family. As to quaternary structure, F-type ATPases have 2 components, CF(1) - the catalytic core - and CF(0) - the membrane proton channel. CF(1) has five subunits: alpha(3), beta(3), gamma(1), delta(1), epsilon(1). CF(0) has three main subunits: a, b and c.

The protein localises to the plastid. It localises to the chloroplast thylakoid membrane. In terms of biological role, produces ATP from ADP in the presence of a proton gradient across the membrane. The sequence is that of ATP synthase epsilon chain, chloroplastic from Cucumis sativus (Cucumber).